Consider the following 885-residue polypeptide: DNA mismatch repair protein MutS (885 aa).

ATP is bound at residue 626–633 (GPNMGGKS).

This sequence belongs to the DNA mismatch repair MutS family.

This protein is involved in the repair of mismatches in DNA. It is possible that it carries out the mismatch recognition step. This protein has a weak ATPase activity. In Burkholderia lata (strain ATCC 17760 / DSM 23089 / LMG 22485 / NCIMB 9086 / R18194 / 383), this protein is DNA mismatch repair protein MutS.